Here is a 248-residue protein sequence, read N- to C-terminus: Calpain small subunit 2 (248 aa).

Ca(2+)-binding residues include Ala89, Asp92, Glu94, Asp117, Asp132, Asp134, Thr136, Lys138, Glu143, Asp162, Asp164, Ser166, and Asp205. EF-hand domains lie at 119–152 (FSLDTCRSIVSVMDSDTTGKLGFEEFKYLWNNIK), 149–184 (NNIKKWQCVYKQYDRDHSGSLGSSQLRGALQAAGFQ), 185–213 (LNEQLYQMIVRRYANEDGDMDFNNFISCL), and 214–248 (VRLDAMFRAFKSLDRDRDGLIQVSIKEWLQLTMYS).

As to quaternary structure, heterodimer of a large (catalytic) and a small (regulatory) subunit.

The protein resides in the cytoplasm. It is found in the cell membrane. Calcium-regulated non-lysosomal thiol-protease which catalyzes limited proteolysis of substrates involved in cytoskeletal remodeling and signal transduction. This small subunit may act as a tissue-specific chaperone of the large subunit, possibly by helping it fold into its correct conformation for activity. The chain is Calpain small subunit 2 (CAPNS2) from Homo sapiens (Human).